The sequence spans 188 residues: uncharacterized protein (188 aa).

A signal peptide spans methionine 1–glycine 18. Cysteine 19 carries the N-palmitoyl cysteine lipid modification. Cysteine 19 carries the S-diacylglycerol cysteine lipid modification.

The protein resides in the cell membrane. This is an uncharacterized protein from Sinorhizobium fredii (strain NBRC 101917 / NGR234).